The chain runs to 109 residues: LSM2-LSM8 complex subunit LSM8 (109 aa).

Positions 1–70 (MSATLKDYLN…IALVGLIDAE (70 aa)) constitute a Sm domain.

The protein belongs to the snRNP Sm proteins family. Component of the heptameric LSM2-LSM8 complex that forms a seven-membered ring structure with a donut shape; an RNA strand can pass through the hole in the center of the ring structure. The LSm subunits are arranged in the order LSM8, LSM2, LSM3, LSM6, LSM5, LSM7 and LSM4. Component of the spliceosome U4/U6-U5 tri-snRNP complex composed of the U4, U6 and U5 snRNAs and at least PRP3, PRP4, PRP6, PRP8, PRP18, PRP31, PRP38, SNU13, SNU23, SNU66, SNU114, SPP381, SMB1, SMD1, SMD2, SMD3, SMX2, SMX3, LSM2, LSM3, LSM4, LSM5, LSM6, LSM7, LSM8, BRR2 and DIB1.

It is found in the nucleus. The protein localises to the cytoplasm. Its function is as follows. Component of the nuclear LSM2-LSM8 complex, which is involved in spliceosome assembly. The LSM2-LSM8 complex plays a role in the biogenesis of the spliceosomal U4/U6-U5 tri-snRNP complex by accelerating PRP24-mediated annealing of U4/U6 di-snRNA. The LSM2-LSM8 complex binds U6 snRNA terminating with a non-cyclic 3' phosphate group. LSM2-LSM8 is probably also involved in degradation of nuclear pre-mRNA by targeting them for decapping. LSM2-LSM8 could be involved in processing of pre-tRNAs, pre-rRNAs and U3 snoRNA, although involvement may be indirect. The protein is LSM2-LSM8 complex subunit LSM8 (LSM8) of Saccharomyces cerevisiae (strain ATCC 204508 / S288c) (Baker's yeast).